The primary structure comprises 217 residues: Octanoyltransferase (217 aa).

In terms of domain architecture, BPL/LPL catalytic spans 32 to 207; sequence NDSPDELWIV…TLSQLLGYQH (176 aa). Residues 71–78, 138–140, and 151–153 each bind substrate; these read RGGQVTYH, SLG, and GLA. C169 (acyl-thioester intermediate) is an active-site residue.

Belongs to the LipB family.

It is found in the cytoplasm. The enzyme catalyses octanoyl-[ACP] + L-lysyl-[protein] = N(6)-octanoyl-L-lysyl-[protein] + holo-[ACP] + H(+). It functions in the pathway protein modification; protein lipoylation via endogenous pathway; protein N(6)-(lipoyl)lysine from octanoyl-[acyl-carrier-protein]: step 1/2. Catalyzes the transfer of endogenously produced octanoic acid from octanoyl-acyl-carrier-protein onto the lipoyl domains of lipoate-dependent enzymes. Lipoyl-ACP can also act as a substrate although octanoyl-ACP is likely to be the physiological substrate. The polypeptide is Octanoyltransferase (Shewanella oneidensis (strain ATCC 700550 / JCM 31522 / CIP 106686 / LMG 19005 / NCIMB 14063 / MR-1)).